The chain runs to 253 residues: MRILLSNDDGIHAPGIQTLAKSLREFAEVQVVAPDRNRSGASNSLTLETPLRTFNYPNGDIAVQMGTPTDCVYLGVNALMRPMPDIVVSGINAGPNLGDDVIYSGTVAAAMEGRHLGLPALAVSLDGYQHYDTAAAVTCSILKALLREPLRTGRILNINVPDLPLDQIKGIRVTRCGSRHPSSQAIAQQDPRGNTLYWIGPPGEKLDAGPDTDFAAVDEGYVSVTALHVDLTAHAAQQVVSSWLASAEVTREW.

Positions 8, 9, 39, and 92 each coordinate a divalent metal cation.

The protein belongs to the SurE nucleotidase family. A divalent metal cation is required as a cofactor.

The protein resides in the cytoplasm. The enzyme catalyses a ribonucleoside 5'-phosphate + H2O = a ribonucleoside + phosphate. It catalyses the reaction a ribonucleoside 3'-phosphate + H2O = a ribonucleoside + phosphate. The catalysed reaction is [phosphate](n) + H2O = [phosphate](n-1) + phosphate + H(+). In terms of biological role, nucleotidase with a broad substrate specificity as it can dephosphorylate various ribo- and deoxyribonucleoside 5'-monophosphates and ribonucleoside 3'-monophosphates with highest affinity to 3'-AMP. Also hydrolyzes polyphosphate (exopolyphosphatase activity) with the preference for short-chain-length substrates (P20-25). Might be involved in the regulation of dNTP and NTP pools, and in the turnover of 3'-mononucleotides produced by numerous intracellular RNases (T1, T2, and F) during the degradation of various RNAs. This Erwinia tasmaniensis (strain DSM 17950 / CFBP 7177 / CIP 109463 / NCPPB 4357 / Et1/99) protein is 5'/3'-nucleotidase SurE.